We begin with the raw amino-acid sequence, 360 residues long: Phospho-N-acetylmuramoyl-pentapeptide-transferase (360 aa).

Transmembrane regions (helical) follow at residues 21-41 (YITVRAILALLTALFISLWIG), 73-93 (TMGGVMILFSIGVSTLLWANL), 94-114 (ANSYIWVCLFVLFGYGAIGFV), 132-152 (WKYFWMSVVALVAILWLYWLG), 168-188 (IMPQLGLFYIVLSYFVIVGTG), 199-219 (GLAIMPTALVAGAFALIAWAT), 239-259 (VVVFCTAIVGASLGFLWFNTY), 263-283 (VFMGDVGSLALGGALGVVAIL), 288-308 (FLLVIMGGVFVVEALSVILQV), and 338-358 (VIIRFWIISLMLVLMGLVTLK).

It belongs to the glycosyltransferase 4 family. MraY subfamily. Mg(2+) serves as cofactor.

It localises to the cell inner membrane. The enzyme catalyses UDP-N-acetyl-alpha-D-muramoyl-L-alanyl-gamma-D-glutamyl-meso-2,6-diaminopimeloyl-D-alanyl-D-alanine + di-trans,octa-cis-undecaprenyl phosphate = di-trans,octa-cis-undecaprenyl diphospho-N-acetyl-alpha-D-muramoyl-L-alanyl-D-glutamyl-meso-2,6-diaminopimeloyl-D-alanyl-D-alanine + UMP. The protein operates within cell wall biogenesis; peptidoglycan biosynthesis. Functionally, catalyzes the initial step of the lipid cycle reactions in the biosynthesis of the cell wall peptidoglycan: transfers peptidoglycan precursor phospho-MurNAc-pentapeptide from UDP-MurNAc-pentapeptide onto the lipid carrier undecaprenyl phosphate, yielding undecaprenyl-pyrophosphoryl-MurNAc-pentapeptide, known as lipid I. In Haemophilus influenzae (strain 86-028NP), this protein is Phospho-N-acetylmuramoyl-pentapeptide-transferase.